A 442-amino-acid chain; its full sequence is tRNA-2-methylthio-N(6)-dimethylallyladenosine synthase (442 aa).

Residues 6–122 (RKFYIHTFGC…LPALIAEAGD (117 aa)) form the MTTase N-terminal domain. Residues C15, C51, C85, C157, C161, and C164 each contribute to the [4Fe-4S] cluster site. Positions 143-373 (RTQSLNAFVP…IDLQNGISAE (231 aa)) constitute a Radical SAM core domain. The region spanning 376–439 (GLAPGSVVEV…SATLFGQSAE (64 aa)) is the TRAM domain.

It belongs to the methylthiotransferase family. MiaB subfamily. As to quaternary structure, monomer. Requires [4Fe-4S] cluster as cofactor.

The protein resides in the cytoplasm. It catalyses the reaction N(6)-dimethylallyladenosine(37) in tRNA + (sulfur carrier)-SH + AH2 + 2 S-adenosyl-L-methionine = 2-methylsulfanyl-N(6)-dimethylallyladenosine(37) in tRNA + (sulfur carrier)-H + 5'-deoxyadenosine + L-methionine + A + S-adenosyl-L-homocysteine + 2 H(+). In terms of biological role, catalyzes the methylthiolation of N6-(dimethylallyl)adenosine (i(6)A), leading to the formation of 2-methylthio-N6-(dimethylallyl)adenosine (ms(2)i(6)A) at position 37 in tRNAs that read codons beginning with uridine. The chain is tRNA-2-methylthio-N(6)-dimethylallyladenosine synthase from Chlorobium phaeobacteroides (strain DSM 266 / SMG 266 / 2430).